The chain runs to 420 residues: Glutaryl-CoA dehydrogenase, mitochondrial (420 aa).

Residue 125 to 126 (RS) participates in substrate binding. FAD is bound by residues 164–167 (FGLT), S173, and 198–200 (WIT). S173 contacts substrate. Substrate is bound by residues 273–277 (FSCLN) and R280. The active-site Proton acceptor is E400. The FAD site is built by T402 and F420.

Belongs to the acyl-CoA dehydrogenase family. FAD is required as a cofactor.

It is found in the mitochondrion matrix. The catalysed reaction is glutaryl-CoA + oxidized [electron-transfer flavoprotein] + 2 H(+) = (2E)-butenoyl-CoA + reduced [electron-transfer flavoprotein] + CO2. It participates in amino-acid metabolism; lysine degradation. It functions in the pathway amino-acid metabolism; tryptophan metabolism. The protein is Glutaryl-CoA dehydrogenase, mitochondrial (gcdh) of Dictyostelium discoideum (Social amoeba).